The sequence spans 189 residues: Density-regulated protein homolog (189 aa).

Residues 105-172 (ICVSRAARGK…DLFDVIPEKW (68 aa)) form the SUI1 domain.

It belongs to the DENR family. As to quaternary structure, interacts with MCTS1.

Functionally, regulates translation as part of a complex with MCTS1. Specifically required for translational re-initiation in mRNAs containing upstream open reading frames (uORFs). Not required for standard translational initiation. Regulates expression of a subset of gene products including mbc, InR and EcR. The chain is Density-regulated protein homolog from Drosophila melanogaster (Fruit fly).